The following is an 874-amino-acid chain: Cyanophycin synthetase (874 aa).

One can recognise an ATP-grasp domain in the interval 224 to 480; it reads KTTLAEAGIP…VAAPVIDMLF (257 aa). Residue 495-501 participates in ATP binding; that stretch reads GTNGKTT.

This sequence in the C-terminal section; belongs to the MurCDEF family. Homodimer.

It carries out the reaction [L-4-(L-arginin-2-N-yl)aspartate](n) + L-aspartate + ATP = [L-4-(L-arginin-2-N-yl)aspartate](n)-L-aspartate + ADP + phosphate + H(+). The enzyme catalyses [L-4-(L-arginin-2-N-yl)aspartate](n)-L-aspartate + L-arginine + ATP = [L-4-(L-arginin-2-N-yl)aspartate](n+1) + ADP + phosphate + H(+). Its function is as follows. Catalyzes the ATP-dependent polymerization of arginine and aspartate to multi-L-arginyl-poly-L-aspartic acid (cyanophycin; a water-insoluble reserve polymer). This is Cyanophycin synthetase (cphA) from Geminocystis herdmanii (strain PCC 6308) (Synechocystis sp. (strain PCC 6308)).